A 190-amino-acid polypeptide reads, in one-letter code: Shikimate kinase (190 aa).

Position 13 to 18 (13 to 18 (GSGKTT)) interacts with ATP. Mg(2+) is bound at residue threonine 17. Substrate-binding residues include aspartate 35, arginine 59, and glycine 81. Position 119 (arginine 119) interacts with ATP. Arginine 138 contacts substrate. Glutamine 155 contributes to the ATP binding site.

This sequence belongs to the shikimate kinase family. Monomer. Requires Mg(2+) as cofactor.

It localises to the cytoplasm. It carries out the reaction shikimate + ATP = 3-phosphoshikimate + ADP + H(+). Its pathway is metabolic intermediate biosynthesis; chorismate biosynthesis; chorismate from D-erythrose 4-phosphate and phosphoenolpyruvate: step 5/7. Functionally, catalyzes the specific phosphorylation of the 3-hydroxyl group of shikimic acid using ATP as a cosubstrate. In Nitrosococcus oceani (strain ATCC 19707 / BCRC 17464 / JCM 30415 / NCIMB 11848 / C-107), this protein is Shikimate kinase.